The chain runs to 276 residues: Large ribosomal subunit protein uL2 (276 aa).

A disordered region spans residues 224 to 276 (VMNPVDHPHGGGEGKAPIGRKSPMTPWGKPTLGYKTRKKKNKSDKFIIRRRKK). Over residues 258–276 (KTRKKKNKSDKFIIRRRKK) the composition is skewed to basic residues.

Belongs to the universal ribosomal protein uL2 family. As to quaternary structure, part of the 50S ribosomal subunit. Forms a bridge to the 30S subunit in the 70S ribosome.

One of the primary rRNA binding proteins. Required for association of the 30S and 50S subunits to form the 70S ribosome, for tRNA binding and peptide bond formation. It has been suggested to have peptidyltransferase activity; this is somewhat controversial. Makes several contacts with the 16S rRNA in the 70S ribosome. In Geobacillus stearothermophilus (Bacillus stearothermophilus), this protein is Large ribosomal subunit protein uL2.